A 158-amino-acid chain; its full sequence is Protein-export protein SecB (158 aa).

This sequence belongs to the SecB family. As to quaternary structure, homotetramer, a dimer of dimers. One homotetramer interacts with 1 SecA dimer.

Its subcellular location is the cytoplasm. Its function is as follows. One of the proteins required for the normal export of preproteins out of the cell cytoplasm. It is a molecular chaperone that binds to a subset of precursor proteins, maintaining them in a translocation-competent state. It also specifically binds to its receptor SecA. In Bartonella quintana (strain Toulouse) (Rochalimaea quintana), this protein is Protein-export protein SecB.